Consider the following 265-residue polypeptide: Polyprenol monophosphomannose synthase (265 aa).

The span at 1 to 10 shows a compositional bias: basic and acidic residues; that stretch reads MSVPGEREQG. The interval 1–21 is disordered; sequence MSVPGEREQGAGEDPATVRPT.

This sequence belongs to the glycosyltransferase 2 family. As to quaternary structure, interacts with Lnt (also called Ppm2, AC A0QZ13) upon coexpression in E.coli, which increases the PPM synthase activity of this protein.

Its subcellular location is the cytoplasm. It catalyses the reaction a di-trans,poly-cis-dolichyl phosphate + GDP-alpha-D-mannose = a di-trans,poly-cis-dolichyl beta-D-mannosyl phosphate + GDP. In terms of biological role, transfers mannose from GDP-mannose to lipid acceptors to form polyprenol monophosphomannose (PPM); catalytic activity in vitro is enhanced by Lnt (AC A0QZ13). PMM is an alkai-stable sugar donor which adds mannose-phosphate residues to triacylated-PIM2, eventually leading to generation of the cell wall glycolipid lipoglycan modulins lipoarabinomannan (LAM) and lipomannan (LM). This Mycolicibacterium smegmatis (strain ATCC 700084 / mc(2)155) (Mycobacterium smegmatis) protein is Polyprenol monophosphomannose synthase.